Here is a 405-residue protein sequence, read N- to C-terminus: Teichoic acid D-alanyltransferase (405 aa).

Topologically, residues 1–9 (MLNLQPYEN) are extracellular. The helical transmembrane segment at 10 to 29 (PQYFVYLIIALLPVIIGMFK) threads the bilayer. Over 30–33 (GFRM) the chain is Cytoplasmic. Residues 34 to 49 (HWYESIFSLVFLVLIF) traverse the membrane as a helical segment. Over 50-53 (DADK) the chain is Extracellular. The chain crosses the membrane as a helical span at residues 54 to 80 (WPQGKALLGYVVFNLLLVYAYFKYRTR). At 81 to 86 (EGSKNS) the chain is on the cytoplasmic side. Residues 87–111 (TAVFYLSVALGIAHVAVVKFTPLFQ) form a helical membrane-spanning segment. Residues 112–121 (HHGSILGFLG) lie on the Extracellular side of the membrane. Residues 122–138 (ISYLTFRVVGTIMEIRD) form a helical membrane-spanning segment. Topologically, residues 139-145 (GSIKDLN) are cytoplasmic. An intramembrane segment occupies 146–175 (MWKFIQFLLFFPTISSGPIDRYRRFVKDYD). The Cytoplasmic portion of the chain corresponds to 176 to 179 (RVPD). A helical transmembrane segment spans residues 180-223 (PEHYAQLVTKAIHYLMLGFLYKFILGYIFGTLWLPSVEHMAMAS). Over 224–232 (RGGAFLGLS) the chain is Extracellular. A helical membrane pass occupies residues 233 to 264 (WPVVGVMYAYSGYLFFDFAGYSLFAVAISYLM). The Cytoplasmic portion of the chain corresponds to 265–274 (GIETPMNFNK). An intramembrane segment occupies 275-310 (PWSHITSRLLNRWQLSLSFWFRDYIYMRFVFFMMKH). The Cytoplasmic portion of the chain corresponds to 311–315 (KWIKS). The chain crosses the membrane as a helical span at residues 316-335 (RVWTAFVGYLVLFLIMGIWH). His335 is a catalytic residue. Residues 336-338 (GET) are Extracellular-facing. Residues 339–372 (WYYIVYGLFHAMLINLTDAWLRFKKKHKDFFPHN) form a helical membrane-spanning segment. The Cytoplasmic segment spans residues 373–378 (RATHYP). A helical membrane pass occupies residues 379–399 (SPFSMTANAVCFSFLIFSGFL). The Extracellular portion of the chain corresponds to 400–405 (DKLWFH).

This sequence belongs to the membrane-bound acyltransferase family.

It localises to the cell membrane. It functions in the pathway cell wall biogenesis; lipoteichoic acid biosynthesis. In terms of biological role, O-acyltransferase that catalyzes D-alanylation of both teichoic acid and lipoteichoic acid (LTA). D-alanylation of LTA plays an important role in modulating the properties of the cell wall in Gram-positive bacteria, influencing the net charge of the cell wall. Catalyzes D-alanylation from DltC carrier protein. This Lacticaseibacillus rhamnosus (Lactobacillus rhamnosus) protein is Teichoic acid D-alanyltransferase.